Here is a 782-residue protein sequence, read N- to C-terminus: E3 UFM1-protein ligase 1 homolog (782 aa).

Residues 405 to 478 are disordered; that stretch reads VSTQELEDDG…TRGGGGASKK (74 aa).

The protein belongs to the UFL1 family.

Its function is as follows. E3 UFM1-protein ligase that mediates ufmylation of target proteins. The protein is E3 UFM1-protein ligase 1 homolog of Drosophila sechellia (Fruit fly).